Consider the following 142-residue polypeptide: Phosphoribosyl-AMP cyclohydrolase (142 aa).

Residue D92 coordinates Mg(2+). Residue C93 participates in Zn(2+) binding. Positions 94 and 96 each coordinate Mg(2+). Residues C109 and C116 each contribute to the Zn(2+) site.

The protein belongs to the PRA-CH family. In terms of assembly, homodimer. Mg(2+) is required as a cofactor. It depends on Zn(2+) as a cofactor.

The protein localises to the cytoplasm. The catalysed reaction is 1-(5-phospho-beta-D-ribosyl)-5'-AMP + H2O = 1-(5-phospho-beta-D-ribosyl)-5-[(5-phospho-beta-D-ribosylamino)methylideneamino]imidazole-4-carboxamide. The protein operates within amino-acid biosynthesis; L-histidine biosynthesis; L-histidine from 5-phospho-alpha-D-ribose 1-diphosphate: step 3/9. Catalyzes the hydrolysis of the adenine ring of phosphoribosyl-AMP. The polypeptide is Phosphoribosyl-AMP cyclohydrolase (Alcanivorax borkumensis (strain ATCC 700651 / DSM 11573 / NCIMB 13689 / SK2)).